The sequence spans 266 residues: Sesquipedalian-1 (266 aa).

In terms of domain architecture, PH spans 17–113 (PVDNAGFLYK…WVKALSRASF (97 aa)). The tract at residues 165-184 (QPSVAPQRPPPLPPRRRASA) is disordered. A Phosphoserine modification is found at S183. The F&amp;H signature appears at 191–203 (SFAQLHARYGLEV).

It belongs to the sesquipedalian family. As to quaternary structure, forms homodimers and heterodimers with PHETA2. Interacts with OCRL and INPP5B. Interaction with OCRL may be important for endosomal morphology and function.

It is found in the early endosome. The protein localises to the recycling endosome. Its subcellular location is the golgi apparatus. The protein resides in the trans-Golgi network. It localises to the cytoplasmic vesicle. It is found in the clathrin-coated vesicle. Functionally, plays a role in endocytic trafficking. Required for receptor recycling from endosomes, both to the trans-Golgi network and the plasma membrane. This is Sesquipedalian-1 from Mus musculus (Mouse).